The primary structure comprises 39 residues: Photosystem II reaction center protein L (39 aa).

The helical transmembrane segment at 18–38 (ILYWGLLLIFVLAVLFSNYFF) threads the bilayer.

It belongs to the PsbL family. PSII is composed of 1 copy each of membrane proteins PsbA, PsbB, PsbC, PsbD, PsbE, PsbF, PsbH, PsbI, PsbJ, PsbK, PsbL, PsbM, PsbT, PsbX, PsbY, PsbZ, Psb30/Ycf12, at least 3 peripheral proteins of the oxygen-evolving complex and a large number of cofactors. It forms dimeric complexes.

The protein localises to the plastid membrane. Its function is as follows. One of the components of the core complex of photosystem II (PSII). PSII is a light-driven water:plastoquinone oxidoreductase that uses light energy to abstract electrons from H(2)O, generating O(2) and a proton gradient subsequently used for ATP formation. It consists of a core antenna complex that captures photons, and an electron transfer chain that converts photonic excitation into a charge separation. This subunit is found at the monomer-monomer interface and is required for correct PSII assembly and/or dimerization. This Cuscuta pentagona (Five-angled dodder) protein is Photosystem II reaction center protein L.